The primary structure comprises 155 residues: Small ribosomal subunit protein uS7 (155 aa).

Belongs to the universal ribosomal protein uS7 family. In terms of assembly, part of the 30S ribosomal subunit. Contacts proteins S9 and S11.

In terms of biological role, one of the primary rRNA binding proteins, it binds directly to 16S rRNA where it nucleates assembly of the head domain of the 30S subunit. Is located at the subunit interface close to the decoding center, probably blocks exit of the E-site tRNA. In Mycoplasma mycoides subsp. mycoides SC (strain CCUG 32753 / NCTC 10114 / PG1), this protein is Small ribosomal subunit protein uS7.